A 526-amino-acid chain; its full sequence is MTDNAIPGPLDPEELQIQYAKSFLLQTDNSGLSLYEHLSALLSRILSERPPNALEVFESLSAELHWSRLKQGSDVLRAPREESHTCRKAEVQRALFSRGDGEGEESEAEGEMTESPLPNLLDLAHLLQQGGVNLGRDEAVRISLALKRLTDTHPLQVCHFWGKILGSGGSYLVAEVQFREGEDDEAEEGGEEEEKGEVEDDVEEEENEEAEDLPPKSTYRPPPVIPKEENGTGANKHVYYVCSEAGAEWVRLPPVTPAQISAARKIRHLFTGNLDAPVITYPPFPGTEINLLRAQIARISAGTHVSPLGYYQFGEEEGEEEEEGAVRDTYEENPDFEGIPVSELVESLSNWVHHVQHILPQGRCVWVNTSVKSEEEEDEEEAEEEEKEEENEPEPEVGPPLLTPLSEDAEIGQTPPWTAFLSTHLIPHYALAVLRSNLWPGAYTVSSAKKFENIYIGWGLKYMPEGYSPPAPPAPQAEYPSGPEITESTDPTVEEEQALKAAKEEAEAAAEEMEEEEDEEEEEEDD.

Disordered stretches follow at residues 180 to 231 (EGED…EENG), 371 to 411 (VKSE…DAEI), and 469 to 526 (PPAP…EEDD). Acidic residues-rich tracts occupy residues 181–212 (GEDD…EAED) and 374–395 (EEEE…EPEP). The segment covering 497–506 (QALKAAKEEA) has biased composition (basic and acidic residues). Residues 507-526 (EAAAEEMEEEEDEEEEEEDD) are compositionally biased toward acidic residues.

This sequence belongs to the flagellar radial spoke RSP4/6 family. As to quaternary structure, component of sperm axonemal radial spoke complexes.

It is found in the cytoplasm. The protein resides in the cytoskeleton. It localises to the flagellum axoneme. Functionally, functions as part of radial spoke complexes in the axoneme of sperm flagella that play an important part in motility. The triple radial spokes (RS1, RS2 and RS3) are required to modulate beating of the sperm flagellum. The chain is Radial spoke head protein 6 homolog A (rsph6a) from Xenopus tropicalis (Western clawed frog).